Here is a 111-residue protein sequence, read N- to C-terminus: Putative ciliary rootlet coiled-coil protein-like 1 protein (111 aa).

A coiled-coil region spans residues 21–86 (MELELSVTKL…RQAEQEATVA (66 aa)).

The protein belongs to the rootletin family.

The chain is Putative ciliary rootlet coiled-coil protein-like 1 protein (CROCCP2) from Homo sapiens (Human).